We begin with the raw amino-acid sequence, 81 residues long: Sulfur carrier protein TusA (81 aa).

Catalysis depends on C19, which acts as the Cysteine persulfide intermediate.

It belongs to the sulfur carrier protein TusA family.

The protein localises to the cytoplasm. Its function is as follows. Sulfur carrier protein which probably makes part of a sulfur-relay system. The sequence is that of Sulfur carrier protein TusA from Shewanella sp. (strain MR-4).